Here is a 1026-residue protein sequence, read N- to C-terminus: MRFFALFIYRPVATILIAAAITLCGILGFRLLPVAPLPQVDFPVIMVSASLPGASPETMASSVATPLERSLGRIAGVNEMTSSSSLGSTRIILEFNFDRDINGAARDVQAAINAAQSLLPGGMPSRPTYRKANPSDAPIMILTLTSESWSQGKLYDFASTQLAQTIAQIDGVGDVDVGGSSLPAVRVGLNPQALFNQGVSLDEVREAIDSANVRRPQGAIEDSVHRWQIQTNDELKTAAEYQPLIIHYNNGAAVRLGDVASVTDSVQDVRNAGMTNAKPAILLMIRKLPEANIIQTVDGIRAKLPELRAMIPAAIDLQIAQDRSPTIRASLQEVEETLAISVALVILVVFLFLRSGRATLIPAVAVPVSLIGTFAAMYLCGFSLNNLSLMALTIATGFVVDDAIVVLENIARHLEAGMKPLQAALQGTREVGFTVISMSLSLVAVFLPLLLMGGLPGRLLREFAVTLSVAIGISLVVSLTLTPMMCGWMLKSSKPRTQPRKRGVGRLLVALQQGYGTSLKWVLNHTRLVGVVFLGTVALNIWLYIAIPKTFFPEQDTGVLMGGIQADQSISFQAMRGKLQDFMKIIRDDPAVNNVTGFTGGSRVNSGMMFITLKPRGERKETAQQIIDRLRVKLAKEPGARLFLMAVQDIRVGGRQANASYQYTLLSDSLPALREWEPKIRKALSALPQLADVNSDQQDNGAEMNLIYDRDTMSRLGIDVQAANSLLNNTFGQRQISTIYQPMNQYKVVMEVDPRYTQDISALEKMFVINRDGKAIPLSYFAQWRPANAPLSVNHQGLSAASTIAFNLPTGTSLSQATEAINRTMTQLGVPSTVRGSFSGTAQVFQQTMNSQLILIVAAIATVYIVLEILYESYVHPLTILSTLPSASVGALLALELFNAPFSLIALIGIMLLIGIVKKNAIMMVDFALEAQRSGGLTPEQAIFQACLLRFRPIMMTTLAALFGALPLVLSGGDGSELRQPLGITIVGGLVMSQLLTLYTTPVVYLFFDRLRLRFSRKNSKPVVEI.

A run of 11 helical transmembrane segments spans residues 15–35, 333–353, 360–380, 387–407, 431–451, 463–483, 528–548, 853–873, 897–917, 953–973, and 984–1004; these read ILIA…LPVA, EVEE…FLFL, LIPA…MYLC, LSLM…IVVL, VGFT…PLLL, FAVT…TLTP, LVGV…IAIP, LILI…LYES, LFNA…IGIV, PIMM…LSGG, and ITIV…TPVV.

It belongs to the resistance-nodulation-cell division (RND) (TC 2.A.6) family. MdtC subfamily. In terms of assembly, part of a tripartite efflux system composed of MdtA, MdtB and MdtC. MdtC forms a heteromultimer with MdtB.

It is found in the cell inner membrane. This Salmonella paratyphi A (strain ATCC 9150 / SARB42) protein is Multidrug resistance protein MdtC.